Reading from the N-terminus, the 705-residue chain is Elongation factor G (705 aa).

The region spanning 8–294 (ELCRNFGIMA…SVIDYLPSPL (287 aa)) is the tr-type G domain. GTP-binding positions include 17-24 (AHIDAGKT), 92-96 (DTPGH), and 146-149 (NKMD).

Belongs to the TRAFAC class translation factor GTPase superfamily. Classic translation factor GTPase family. EF-G/EF-2 subfamily.

It is found in the cytoplasm. In terms of biological role, catalyzes the GTP-dependent ribosomal translocation step during translation elongation. During this step, the ribosome changes from the pre-translocational (PRE) to the post-translocational (POST) state as the newly formed A-site-bound peptidyl-tRNA and P-site-bound deacylated tRNA move to the P and E sites, respectively. Catalyzes the coordinated movement of the two tRNA molecules, the mRNA and conformational changes in the ribosome. The protein is Elongation factor G of Cereibacter sphaeroides (strain ATCC 17023 / DSM 158 / JCM 6121 / CCUG 31486 / LMG 2827 / NBRC 12203 / NCIMB 8253 / ATH 2.4.1.) (Rhodobacter sphaeroides).